Consider the following 231-residue polypeptide: U1 small nuclear ribonucleoprotein C-1 (231 aa).

The segment at 4–36 (YYCDYCDTYLTHDSPSVRKQHNAGYKHKANVRT) adopts a Matrin-type zinc-finger fold. Composition is skewed to pro residues over residues 117 to 127 (APGIPGYPGGP), 134 to 159 (GAPPGSMPQPGAPPGSMPQPGAPPGS), and 167 to 178 (LPRPPTLPPPTS). The tract at residues 117 to 231 (APGIPGYPGG…SYAQPSEGNH (115 aa)) is disordered. A compositionally biased stretch (low complexity) spans 181-193 (PGAPIPNSAAPPA). Positions 199-217 (PPAPAGPTSGAPPAPPTAP) are enriched in pro residues.

This sequence belongs to the U1 small nuclear ribonucleoprotein C family. As to quaternary structure, U1 snRNP is composed of the 7 core Sm proteins B/B', D1, D2, D3, E, F and G that assemble in a heptameric protein ring on the Sm site of the small nuclear RNA to form the core snRNP, and at least 3 U1 snRNP-specific proteins U1-70K, U1-A and U1-C. U1-C interacts with U1 snRNA and the 5' splice-site region of the pre-mRNA.

Its subcellular location is the nucleus. Its function is as follows. Component of the spliceosomal U1 snRNP, which is essential for recognition of the pre-mRNA 5' splice-site and the subsequent assembly of the spliceosome. U1-C is directly involved in initial 5' splice-site recognition for both constitutive and regulated alternative splicing. The interaction with the 5' splice-site seems to precede base-pairing between the pre-mRNA and the U1 snRNA. Stimulates commitment or early (E) complex formation by stabilizing the base pairing of the 5' end of the U1 snRNA and the 5' splice-site region. This Sorghum bicolor (Sorghum) protein is U1 small nuclear ribonucleoprotein C-1.